Here is an 85-residue protein sequence, read N- to C-terminus: Putative defensin-like protein 79 (85 aa).

The signal sequence occupies residues 1 to 31; it reads MKSEKSADAYGTYFLLISTIFLLFIARQASS. 4 disulfides stabilise this stretch: Cys-37–Cys-69, Cys-44–Cys-60, Cys-47–Cys-67, and Cys-51–Cys-68.

Belongs to the DEFL family.

The protein resides in the secreted. The chain is Putative defensin-like protein 79 from Arabidopsis thaliana (Mouse-ear cress).